A 442-amino-acid chain; its full sequence is MRLSRYFLPILKENPKEAEIVSHRLMLRSGMIRQQSAGIYSWLPIGLKVLNKVCTIIREEQNRAGANEILMPTIQSADLWRESGRYDAYGKEMLRIQDRQEREMLFGPTNEEMVTDIFRSYVRSYKDLPLNLYHIQWKFRDEVRPRFGVMRSREFLMKDAYSFDLDYEGAKMAYYRMFVSYLRTFARVGLQAIPMRADTGPIGGDLSHEFIILAETGESQVYCDRAYLDLAVPGADTDFRNDAQLTDIVTRWTTPYAATDEMHDEADWAKVKPESQVSARGIEVGHIFHFGTKYSEPMGAKVQGPDGKEHLVSMGSYGIGPSRLVAAAIEASHDDAGIIWPKAIAPFGAGIVNMKPGDEGCDGVSEKLYEALTNAGVDPLLDDKDERPGAKFATMDLIGLPTQVIVGPRGVAAGEVEVKDRKMGERQSLGIEAAINMLTAQA.

This sequence belongs to the class-II aminoacyl-tRNA synthetase family. ProS type 2 subfamily. In terms of assembly, homodimer.

The protein localises to the cytoplasm. The catalysed reaction is tRNA(Pro) + L-proline + ATP = L-prolyl-tRNA(Pro) + AMP + diphosphate. Functionally, catalyzes the attachment of proline to tRNA(Pro) in a two-step reaction: proline is first activated by ATP to form Pro-AMP and then transferred to the acceptor end of tRNA(Pro). This is Proline--tRNA ligase from Brucella canis (strain ATCC 23365 / NCTC 10854 / RM-666).